The chain runs to 501 residues: Cryptochrome-1 (501 aa).

Residues 5–134 (KKTIVWFRRD…SVQSYNGDLC (130 aa)) enclose the Photolyase/cryptochrome alpha/beta domain. Residues Y231 and 243–247 (TSLLS) each bind FAD. ATP is bound at residue R356. 2 residues coordinate FAD: D386 and D388. D405 provides a ligand contact to ATP.

The protein belongs to the DNA photolyase class-1 family. As to quaternary structure, homodimer. Requires FAD as cofactor. It depends on (6R)-5,10-methylene-5,6,7,8-tetrahydrofolate as a cofactor.

Its function is as follows. Mediates blue light-induced gene expression in addition to its role in blue light-dependent inhibition of stem growth. This Sinapis alba (White mustard) protein is Cryptochrome-1 (PHR1).